A 359-amino-acid polypeptide reads, in one-letter code: tRNA-specific 2-thiouridylase MnmA (359 aa).

ATP contacts are provided by residues 7–14 (AMSGGVDS) and methionine 33. The Nucleophile role is filled by cysteine 101. Residues cysteine 101 and cysteine 198 are joined by a disulfide bond. Glycine 125 contributes to the ATP binding site. Residues 148–150 (KDQ) form an interaction with tRNA region. Cysteine 198 serves as the catalytic Cysteine persulfide intermediate.

Belongs to the MnmA/TRMU family.

It localises to the cytoplasm. The enzyme catalyses S-sulfanyl-L-cysteinyl-[protein] + uridine(34) in tRNA + AH2 + ATP = 2-thiouridine(34) in tRNA + L-cysteinyl-[protein] + A + AMP + diphosphate + H(+). In terms of biological role, catalyzes the 2-thiolation of uridine at the wobble position (U34) of tRNA, leading to the formation of s(2)U34. The chain is tRNA-specific 2-thiouridylase MnmA from Chloroflexus aurantiacus (strain ATCC 29366 / DSM 635 / J-10-fl).